A 202-amino-acid polypeptide reads, in one-letter code: Peptidyl-tRNA hydrolase (202 aa).

Tyrosine 14 is a tRNA binding site. Catalysis depends on histidine 19, which acts as the Proton acceptor. TRNA contacts are provided by tyrosine 64, asparagine 66, and asparagine 112.

Belongs to the PTH family. As to quaternary structure, monomer.

The protein resides in the cytoplasm. The catalysed reaction is an N-acyl-L-alpha-aminoacyl-tRNA + H2O = an N-acyl-L-amino acid + a tRNA + H(+). Functionally, hydrolyzes ribosome-free peptidyl-tRNAs (with 1 or more amino acids incorporated), which drop off the ribosome during protein synthesis, or as a result of ribosome stalling. In terms of biological role, catalyzes the release of premature peptidyl moieties from peptidyl-tRNA molecules trapped in stalled 50S ribosomal subunits, and thus maintains levels of free tRNAs and 50S ribosomes. The polypeptide is Peptidyl-tRNA hydrolase (Nitrobacter winogradskyi (strain ATCC 25391 / DSM 10237 / CIP 104748 / NCIMB 11846 / Nb-255)).